A 999-amino-acid polypeptide reads, in one-letter code: Sarcoplasmic/endoplasmic reticulum calcium ATPase 3 (999 aa).

Methionine 1 bears the N-acetylmethionine mark. The Cytoplasmic segment spans residues 1–48; it reads MEEAHLLPAADVLRRFSVTAEGGLSPAQVTRARERYGPNELPTEEGKS. Residue serine 17 is modified to Phosphoserine. Position 19 is a phosphothreonine (threonine 19). The residue at position 25 (serine 25) is a Phosphoserine. The helical transmembrane segment at 49 to 69 threads the bilayer; the sequence is LWELVLEQFEDLLVRILLLAA. Over 70-89 the chain is Extracellular; that stretch reads LVSFVLACFEEGEETTTAFV. The chain crosses the membrane as a helical span at residues 90-110; it reads EPLVIVLILVANAVVGVWQER. At 111 to 253 the chain is on the cytoplasmic side; it reads NAENAIEALK…PERTPLQQKL (143 aa). The chain crosses the membrane as a helical span at residues 254–273; the sequence is DEFGRQLSRAISVICMAVWV. Over 274–295 the chain is Extracellular; it reads INIGHFADPAHGGSWLRGAVYY. A helical transmembrane segment spans residues 296–313; it reads FKIAVALAVAAIPEGLPA. Ca(2+) is bound by residues valine 304, alanine 305, isoleucine 307, and glutamate 309. At 314–757 the chain is on the cytoplasmic side; the sequence is VITTCLALGT…EEGRAIYSNM (444 aa). The active-site 4-aspartylphosphate intermediate is the aspartate 351. Mg(2+) is bound by residues aspartate 351 and threonine 353. Threonine 353 is a binding site for ATP. An interaction with phospholamban 1 region spans residues 370-400; that stretch reads AEAEAGTCRLHEFTISGTTYAPEGEVRQGEQ. Threonine 415 carries the phosphothreonine modification. Residues glutamate 442, arginine 489, lysine 515, arginine 560, threonine 625, glycine 626, and aspartate 627 each contribute to the ATP site. Serine 662 carries the post-translational modification Phosphoserine. ATP-binding residues include arginine 678 and lysine 684. Mg(2+) is bound at residue aspartate 703. Asparagine 706 is a binding site for ATP. A helical membrane pass occupies residues 758 to 777; sequence KQFIRYLISSNVGEVVCIFL. The Ca(2+) site is built by asparagine 768 and glutamate 771. Over 778 to 787 the chain is Extracellular; that stretch reads TAILGLPEAL. Residues 788 to 808 form a helical membrane-spanning segment; sequence IPVQLLWVNLVTDGLPATALG. The tract at residues 788–808 is interaction with phospholamban 2; that stretch reads IPVQLLWVNLVTDGLPATALG. Residues asparagine 796, threonine 799, and aspartate 800 each contribute to the Ca(2+) site. At 809–828 the chain is on the cytoplasmic side; it reads FNPPDLDIMEKRPRNPREAL. A helical membrane pass occupies residues 829-851; that stretch reads ISGWLFFRYLAIGVYVGLATVAA. At 852 to 897 the chain is on the extracellular side; that stretch reads ATWWFLYDAEGPQVTFYQLRNFLKCSEDNPLFTGTDCEVFESRFPT. Cysteine 876 and cysteine 888 are disulfide-bonded. The helical transmembrane segment at 898–917 threads the bilayer; that stretch reads TMALSVLVTTEMCNALNSVS. Residue glutamate 908 coordinates Ca(2+). Topologically, residues 918–930 are cytoplasmic; the sequence is ENQSLLRMPPWLN. Residues 931–949 form a helical membrane-spanning segment; that stretch reads PWLLAAVAMSMALHFLILL. Topologically, residues 950–964 are extracellular; the sequence is VPPLPLIFQVTPLSG. Residues 965–985 traverse the membrane as a helical segment; it reads RQWVVVLQISLPVILLDEALK. The Cytoplasmic segment spans residues 986–999; the sequence is YLSRKHVDEEKGRQ.

It belongs to the cation transport ATPase (P-type) (TC 3.A.3) family. Type IIA subfamily. In terms of assembly, interacts with sarcolipin (SLN). Interacts with phospholamban (PLN). Interacts with myoregulin (MRLN). Interacts with DWORF. Interacts with VMP1. Interacts with TUNAR; the interaction occurs at low levels in low glucose conditions and is increased by high glucose levels. The cofactor is Mg(2+). Expressed in endothelial tissues.

The protein resides in the endoplasmic reticulum membrane. It is found in the sarcoplasmic reticulum membrane. The catalysed reaction is Ca(2+)(in) + ATP + H2O = Ca(2+)(out) + ADP + phosphate + H(+). Inhibited by sarcolipin (SLN), phospholamban (PLN) and myoregulin (MRLN). Enhanced by DWORF; DWORF increases activity by displacing sarcolipin (SLN), phospholamban (PLN) and myoregulin (MRLN). In terms of biological role, this magnesium-dependent enzyme catalyzes the hydrolysis of ATP coupled with the transport of calcium. Transports calcium ions from the cytosol into the sarcoplasmic/endoplasmic reticulum lumen. Contributes to calcium sequestration involved in muscular excitation/contraction. This is Sarcoplasmic/endoplasmic reticulum calcium ATPase 3 (ATP2A3) from Sus scrofa (Pig).